The chain runs to 148 residues: Ubiquitin-conjugating enzyme E2 4 (148 aa).

A disordered region spans residues M1–C22. Residues S2–V148 form the UBC core domain. Basic and acidic residues predominate over residues I7–P18. S12 is modified (phosphoserine). C86 acts as the Glycyl thioester intermediate in catalysis. K91 is covalently cross-linked (Glycyl lysine isopeptide (Lys-Gly) (interchain with G-Cter in ubiquitin)).

The protein belongs to the ubiquitin-conjugating enzyme family. Interacts with TUL1. The N-terminus is blocked.

The enzyme catalyses S-ubiquitinyl-[E1 ubiquitin-activating enzyme]-L-cysteine + [E2 ubiquitin-conjugating enzyme]-L-cysteine = [E1 ubiquitin-activating enzyme]-L-cysteine + S-ubiquitinyl-[E2 ubiquitin-conjugating enzyme]-L-cysteine.. It participates in protein modification; protein ubiquitination. Functionally, E2 ubiquitin-conjugating enzyme that catalyzes the covalent attachment of ubiquitin to other proteins. Mediates the selective degradation of short-lived and abnormal proteins. Mediates ubiquitination of PEX5. The polypeptide is Ubiquitin-conjugating enzyme E2 4 (Saccharomyces cerevisiae (strain ATCC 204508 / S288c) (Baker's yeast)).